The primary structure comprises 290 residues: 4-diphosphocytidyl-2-C-methyl-D-erythritol kinase (290 aa).

Residue K10 is part of the active site. ATP is bound at residue 95–105; the sequence is PVAAGLAGGSS. The active site involves D137.

Belongs to the GHMP kinase family. IspE subfamily.

It catalyses the reaction 4-CDP-2-C-methyl-D-erythritol + ATP = 4-CDP-2-C-methyl-D-erythritol 2-phosphate + ADP + H(+). The protein operates within isoprenoid biosynthesis; isopentenyl diphosphate biosynthesis via DXP pathway; isopentenyl diphosphate from 1-deoxy-D-xylulose 5-phosphate: step 3/6. Catalyzes the phosphorylation of the position 2 hydroxy group of 4-diphosphocytidyl-2C-methyl-D-erythritol. The polypeptide is 4-diphosphocytidyl-2-C-methyl-D-erythritol kinase (Geobacillus kaustophilus (strain HTA426)).